Here is a 433-residue protein sequence, read N- to C-terminus: MSDKLSYKVADISLADWGRKAIEIAENEMPGLMKMREMHSESKPLKGARIAGCLHMTLQTAVLIETLTALGAEVQWSSCNIFSTQDHAAAAIAKTGVPVYAWKGETDEEYIWCIEQTIYFKDGKPLNMILDDGGDLTNLVHSKYPQLLKGIKGISEETTTGVHNLYKMKSSGTLQVPAINVNDSVTKSKFDNLYGCRESLIDGIKRATDVMIAGKVAVVAGYGDVGKGCAQALRAFGARVIITEIDPINALQAAMEGYEVTTMDEASKEGNIFVTTTGCADIVEGRHFENMKDDSIVCNIGHFDIELDVKWLNENAVKKVNIKPQVDRYLLKNGRHIILLAEGRLVNLGCAMGHPSFVMSNSFTNQVMAQIELWTNTDKYPVGVYFLPKKLDEAVAAAHLDKLGVKLTKLTDKQAKYLGLDKEGPFKPDHYRY.

The substrate site is built by threonine 57, aspartate 132, glutamate 157, lysine 187, and aspartate 191. The tract at residues 184–351 is NAD binding; the sequence is SVTKSKFDNL…EGRLVNLGCA (168 aa).

This sequence belongs to the adenosylhomocysteinase family. As to quaternary structure, homotetramer. Requires NAD(+) as cofactor.

It localises to the cytoplasm. The enzyme catalyses S-adenosyl-L-homocysteine + H2O = L-homocysteine + adenosine. Its pathway is amino-acid biosynthesis; L-homocysteine biosynthesis; L-homocysteine from S-adenosyl-L-homocysteine: step 1/1. Its function is as follows. Catalyzes the hydrolysis of S-adenosyl-L-homocysteine to form adenosine and homocysteine. Binds copper ions. This chain is Adenosylhomocysteinase A (ahcy-a), found in Xenopus laevis (African clawed frog).